The primary structure comprises 124 residues: MIRRAPTTLQLSHDDVTSLIDDLNEQKLKQQLNIEKTKYFQGKNGGSLHSNTDFQDTSQNIEDNNNDNDNDIDEDDDMSSYNDKAASVAHTRVLNSLHLSTDSNTAHETSNANDNHNPFYIREE.

Phosphoserine is present on Ser12. 2 disordered regions span residues 40-87 (FQGK…KAAS) and 99-124 (LSTD…IREE). A compositionally biased stretch (polar residues) spans 47–59 (SLHSNTDFQDTSQ). Over residues 64–78 (NNNDNDNDIDEDDDM) the composition is skewed to acidic residues. Polar residues predominate over residues 99–116 (LSTDSNTAHETSNANDNH).

This sequence belongs to the CDC26 family. In terms of assembly, the APC/C is composed of at least 13 subunits that stay tightly associated throughout the cell cycle: APC1, APC2, APC4, APC5, APC9, APC11, CDC16, CDC23, CDC26, CDC27, DOC1, MND2 and SWM1. CDC26 is required to tether the essential subunits APC9, CDC27 and CDC16 to the complex.

The protein localises to the nucleus. The protein operates within protein modification; protein ubiquitination. Component of the anaphase promoting complex/cyclosome (APC/C), a cell cycle-regulated E3 ubiquitin-protein ligase complex that controls progression through mitosis and the G1 phase of the cell cycle. The APC/C is thought to confer substrate specificity and, in the presence of ubiquitin-conjugating E2 enzymes, it catalyzes the formation of protein-ubiquitin conjugates that are subsequently degraded by the 26S proteasome. In early mitosis, the APC/C is activated by CDC20 and targets securin PDS1, the B-type cyclin CLB5, and other anaphase inhibitory proteins for proteolysis, thereby triggering the separation of sister chromatids at the metaphase-to-anaphase transition. In late mitosis and in G1, degradation of CLB5 allows activation of the APC/C by CDH1, which is needed to destroy CDC20 and the B-type cyclin CLB2 to allow exit from mitosis and creating the low CDK state necessary for cytokinesis and for reforming prereplicative complexes in G1 prior to another round of replication. This Saccharomyces cerevisiae (strain ATCC 204508 / S288c) (Baker's yeast) protein is Anaphase-promoting complex subunit CDC26 (CDC26).